A 222-amino-acid chain; its full sequence is Probable septum site-determining protein MinC (222 aa).

The protein belongs to the MinC family. In terms of assembly, interacts with MinD and FtsZ.

Cell division inhibitor that blocks the formation of polar Z ring septums. Rapidly oscillates between the poles of the cell to destabilize FtsZ filaments that have formed before they mature into polar Z rings. Prevents FtsZ polymerization. This chain is Probable septum site-determining protein MinC, found in Lysinibacillus sphaericus (strain C3-41).